A 263-amino-acid polypeptide reads, in one-letter code: Putative TATA-binding protein pB263R (263 aa).

This sequence belongs to the asfivirus B263R family.

In terms of biological role, putative TATA-binding protein. The polypeptide is Putative TATA-binding protein pB263R (Ornithodoros (relapsing fever ticks)).